Here is a 254-residue protein sequence, read N- to C-terminus: Imidazole glycerol phosphate synthase subunit HisF (254 aa).

Residues Asp-12 and Asp-131 contribute to the active site.

Belongs to the HisA/HisF family. In terms of assembly, heterodimer of HisH and HisF.

It localises to the cytoplasm. The catalysed reaction is 5-[(5-phospho-1-deoxy-D-ribulos-1-ylimino)methylamino]-1-(5-phospho-beta-D-ribosyl)imidazole-4-carboxamide + L-glutamine = D-erythro-1-(imidazol-4-yl)glycerol 3-phosphate + 5-amino-1-(5-phospho-beta-D-ribosyl)imidazole-4-carboxamide + L-glutamate + H(+). The protein operates within amino-acid biosynthesis; L-histidine biosynthesis; L-histidine from 5-phospho-alpha-D-ribose 1-diphosphate: step 5/9. Functionally, IGPS catalyzes the conversion of PRFAR and glutamine to IGP, AICAR and glutamate. The HisF subunit catalyzes the cyclization activity that produces IGP and AICAR from PRFAR using the ammonia provided by the HisH subunit. The chain is Imidazole glycerol phosphate synthase subunit HisF from Desulfitobacterium hafniense (strain Y51).